Here is a 291-residue protein sequence, read N- to C-terminus: Acetylglutamate kinase (291 aa).

Substrate-binding positions include 64–65 (GG), Arg-86, and Asn-190.

It belongs to the acetylglutamate kinase family. ArgB subfamily.

It localises to the cytoplasm. The enzyme catalyses N-acetyl-L-glutamate + ATP = N-acetyl-L-glutamyl 5-phosphate + ADP. It functions in the pathway amino-acid biosynthesis; L-arginine biosynthesis; N(2)-acetyl-L-ornithine from L-glutamate: step 2/4. In terms of biological role, catalyzes the ATP-dependent phosphorylation of N-acetyl-L-glutamate. This Leptospira borgpetersenii serovar Hardjo-bovis (strain L550) protein is Acetylglutamate kinase.